A 369-amino-acid polypeptide reads, in one-letter code: MNNSYYVGLMSGTSMDGVDAVLVNFDGDQPSLIATHTEALPKALLSNLQKLCLPGNDEINRLGHLDRAMGKLFAKATNALLEKAGVDKSQVIAIGSHGQTVRHMPNLEMGFTLQIADPNTIAAETGIDVIADFRRKDIALGGQGAPLVPAFHQHVFANPNHQRIILNIGGIANVTYLPGNTQDVTGFDTGPGNGLSDAWIQHQLGQPFDKDGAWAASGTTDQKMLQHLLSHPYFALAAPKSTGRELFNQAWAEQQLSEFGHLSEADIQSTLLDLTCYSIANDALTLSDNGEMYVCGGGAYNCELMHRLRKLLPDYKVVTTSELGMDPQWVEGIAFAWLAMRHHNGLPGNLPAVTGASREAILGSFHPAD.

12–19 (GTSMDGVD) is a binding site for ATP.

It belongs to the anhydro-N-acetylmuramic acid kinase family.

The enzyme catalyses 1,6-anhydro-N-acetyl-beta-muramate + ATP + H2O = N-acetyl-D-muramate 6-phosphate + ADP + H(+). It participates in amino-sugar metabolism; 1,6-anhydro-N-acetylmuramate degradation. The protein operates within cell wall biogenesis; peptidoglycan recycling. Its function is as follows. Catalyzes the specific phosphorylation of 1,6-anhydro-N-acetylmuramic acid (anhMurNAc) with the simultaneous cleavage of the 1,6-anhydro ring, generating MurNAc-6-P. Is required for the utilization of anhMurNAc either imported from the medium or derived from its own cell wall murein, and thus plays a role in cell wall recycling. The polypeptide is Anhydro-N-acetylmuramic acid kinase (Shewanella halifaxensis (strain HAW-EB4)).